Reading from the N-terminus, the 318-residue chain is Protease HtpX homolog (318 aa).

2 helical membrane passes run 6–26 (TAMLLAFMTALFMFVGFLIGG) and 28–48 (AGMMIAFLIAAGMNFFSYWNS). Zn(2+) is bound at residue histidine 130. Glutamate 131 is an active-site residue. A Zn(2+)-binding site is contributed by histidine 134. Transmembrane regions (helical) follow at residues 145–165 (ITATLAGAISMLGNFAFFFGG) and 173–193 (PLGFVGVLVAMIVAPLAAMLV). Glutamate 202 contributes to the Zn(2+) binding site. The segment at 284-318 (NVSTGPVRAVNPTRKSRSVPNTGRGGSQPPRGPWS) is disordered.

The protein belongs to the peptidase M48B family. Requires Zn(2+) as cofactor.

It localises to the cell inner membrane. The chain is Protease HtpX homolog from Rhizobium etli (strain CIAT 652).